The following is a 196-amino-acid chain: Kunitz trypsin inhibitor 5 (196 aa).

The first 19 residues, 1–19 (MSSLLYIFLLLAVFISHRG), serve as a signal peptide directing secretion. A disulfide bridge connects residues Cys-156 and Cys-167.

Belongs to the protease inhibitor I3 (leguminous Kunitz-type inhibitor) family.

It localises to the endoplasmic reticulum. Functionally, can inhibit both serine proteases and cysteine proteases. May be involved in the modulation of the proteases that participate in the hydrolysis of dietary proteins in the gut of spider mites. In Arabidopsis thaliana (Mouse-ear cress), this protein is Kunitz trypsin inhibitor 5.